The chain runs to 507 residues: Natural resistance-associated macrophage protein 1 (507 aa).

Positions Met1–Leu36 are disordered. Topologically, residues Met1 to Lys39 are cytoplasmic. The span at Gln8–Pro22 shows a compositional bias: polar residues. The chain crosses the membrane as a helical span at residues Ile40 to Leu60. Residues Leu61 to Arg123 are Extracellular-facing. A helical membrane pass occupies residues Ile124 to Asp144. Residues Asn145–Glu152 are Cytoplasmic-facing. Residues Ala153 to Ala173 traverse the membrane as a helical segment. Residues Arg174 to Gln199 are Extracellular-facing. Residues Ala200–Val220 traverse the membrane as a helical segment. The Cytoplasmic portion of the chain corresponds to Lys221 to Thr245. Residues Ile246–Phe266 traverse the membrane as a helical segment. Topologically, residues Tyr267–Gly305 are extracellular. N-linked (GlcNAc...) asparagine glycans are attached at residues Asn280 and Asn294. Residues Val306 to Ala326 traverse the membrane as a helical segment. The Cytoplasmic portion of the chain corresponds to Ala327–Arg353. A helical membrane pass occupies residues Phe354 to Phe374. The Extracellular segment spans residues Arg375–Gln391. Residues Ser392–Met412 form a helical membrane-spanning segment. The Cytoplasmic segment spans residues Gln413–Lys422. The chain crosses the membrane as a helical span at residues Val423–Tyr443. At Leu444–Ala451 the chain is on the extracellular side. The helical transmembrane segment at Tyr452 to Trp472 threads the bilayer. Topologically, residues Thr473–Gly507 are cytoplasmic.

The protein belongs to the NRAMP family.

The protein localises to the late endosome membrane. It localises to the lysosome membrane. The enzyme catalyses Zn(2+)(in) + H(+)(out) = Zn(2+)(out) + H(+)(in). The catalysed reaction is Fe(2+)(in) + H(+)(out) = Fe(2+)(out) + H(+)(in). It catalyses the reaction Mn(2+)(in) + H(+)(out) = Mn(2+)(out) + H(+)(in). In terms of biological role, macrophage-specific antiporter that fluxes metal ions in either direction against a proton gradient. Localized to late endosomal lysosomal membranes, delivers bivalent cations from the cytosol into these acidic compartments where they may directly affect antimicrobial activity. Involved in iron metabolism and host natural resistance to infection with intracellular parasites. Pathogen resistance involves sequestration of Fe(2+) and Mn(2+), cofactors of both prokaryotic and eukaryotic catalases and superoxide dismutases, not only to protect the macrophage against its own generation of reactive oxygen species, but to deny the cations to the pathogen for synthesis of its protective enzymes. This chain is Natural resistance-associated macrophage protein 1 (Slc11a1), found in Rattus norvegicus (Rat).